The sequence spans 288 residues: MQLIVVSGRSGSGKTVALRVLEDLGYYCVDNLPVNLLPQLIVSVESQYDKLAVSIDVRNLPASPDKLETLLAQVRNEGRVEFSSFFFDAENSTLLKRYGESRRLHPLSRNQLSLDEAIREETHLLAPLSSTADLRIDTTNLSIHDLSELIKTRVLGKKENELVLVFESFGFKYGIPKDADFVFDARFLPNPHWIPELKPFTGKDEPVARYLSSQPDVMQFILQIENMLATWLPHLERNNRSYVTVGIGCTGGQHRSVFIAEQLAGAFRLLGKNVQIRHRTLDKSAPQF.

Position 8-15 (8-15) interacts with ATP; the sequence is GRSGSGKT. 56-59 serves as a coordination point for GTP; the sequence is DVRN.

The protein belongs to the RapZ-like family.

Its function is as follows. Displays ATPase and GTPase activities. The polypeptide is Nucleotide-binding protein AHA_3920 (Aeromonas hydrophila subsp. hydrophila (strain ATCC 7966 / DSM 30187 / BCRC 13018 / CCUG 14551 / JCM 1027 / KCTC 2358 / NCIMB 9240 / NCTC 8049)).